A 642-amino-acid polypeptide reads, in one-letter code: Threonine--tRNA ligase (642 aa).

The TGS domain occupies 1 to 65; that stretch reads MSDIITVTLP…DEDVKLQIFT (65 aa). The segment at 248 to 541 is catalytic; sequence DHRKLGKELD…LIEHFAGAFP (294 aa). Zn(2+) is bound by residues Cys-342, His-393, and His-518.

This sequence belongs to the class-II aminoacyl-tRNA synthetase family. As to quaternary structure, homodimer. Zn(2+) serves as cofactor.

It is found in the cytoplasm. The enzyme catalyses tRNA(Thr) + L-threonine + ATP = L-threonyl-tRNA(Thr) + AMP + diphosphate + H(+). Catalyzes the attachment of threonine to tRNA(Thr) in a two-step reaction: L-threonine is first activated by ATP to form Thr-AMP and then transferred to the acceptor end of tRNA(Thr). Also edits incorrectly charged L-seryl-tRNA(Thr). The protein is Threonine--tRNA ligase of Myxococcus xanthus (strain DK1622).